A 313-amino-acid polypeptide reads, in one-letter code: tRNA pseudouridine synthase B (313 aa).

The active-site Nucleophile is D46.

This sequence belongs to the pseudouridine synthase TruB family. Type 1 subfamily.

It catalyses the reaction uridine(55) in tRNA = pseudouridine(55) in tRNA. Functionally, responsible for synthesis of pseudouridine from uracil-55 in the psi GC loop of transfer RNAs. The chain is tRNA pseudouridine synthase B from Nitrosospira multiformis (strain ATCC 25196 / NCIMB 11849 / C 71).